A 188-amino-acid polypeptide reads, in one-letter code: Nicotinamide-nucleotide adenylyltransferase (188 aa).

The protein belongs to the archaeal NMN adenylyltransferase family.

It is found in the cytoplasm. The catalysed reaction is beta-nicotinamide D-ribonucleotide + ATP + H(+) = diphosphate + NAD(+). It functions in the pathway cofactor biosynthesis; NAD(+) biosynthesis; NAD(+) from nicotinamide D-ribonucleotide: step 1/1. The protein is Nicotinamide-nucleotide adenylyltransferase of Pyrococcus furiosus (strain ATCC 43587 / DSM 3638 / JCM 8422 / Vc1).